The sequence spans 190 residues: Probable RNA-binding protein 18 (190 aa).

One can recognise an RRM domain in the interval 25 to 106 (HRLWIGNLDP…KKLVVRWAHA (82 aa)). Positions 166 to 190 (VYSYFKPPDKKRTTPYSRTAWKSRR) are disordered.

The sequence is that of Probable RNA-binding protein 18 (RBM18) from Pongo abelii (Sumatran orangutan).